The sequence spans 198 residues: Rac-like GTP-binding protein ARAC3 (198 aa).

GTP-binding positions include glycine 13–cysteine 21, phenylalanine 31–threonine 38, aspartate 60–glutamine 64, and threonine 118–aspartate 121. The Effector region signature appears at tyrosine 35–phenylalanine 43. The S-palmitoyl cysteine moiety is linked to residue cysteine 158. A Cysteine methyl ester modification is found at cysteine 195. A lipid anchor (S-geranylgeranyl cysteine) is attached at cysteine 195. The propeptide at serine 196–leucine 198 is removed in mature form.

This sequence belongs to the small GTPase superfamily. Rho family. In terms of assembly, interacts with Rho GDP-dissociation inhibitor 1 and ICR1. Binds to SPK1 when in the inactive GDP-bound form. As to expression, ubiquitous. Preferentially expressed at the tip of root hairs.

The protein resides in the cytoplasm. It localises to the cell membrane. In terms of biological role, inactive GDP-bound Rho GTPases reside in the cytosol, are found in a complex with Rho GDP-dissociation inhibitors (Rho GDIs), and are released from the GDI protein in order to translocate to membranes upon activation. Involved in cell polarity control during the actin-dependent tip growth of root hairs, thus regulating root hair length and root hair initiation. Contributes, in a SPK1-dependent manner, to the prevention of cortical microtubules organization into parallel arrays oriented perpendicular to the axis of cell elongation to limit anisotropic cell growth during petal development. SPK1-dependent activation is required for auxin-mediated inhibition of PIN2 internalization during gravitropic responses. The protein is Rac-like GTP-binding protein ARAC3 of Arabidopsis thaliana (Mouse-ear cress).